The sequence spans 466 residues: Integrin-linked protein kinase homolog pat-4 (466 aa).

3 ANK repeats span residues 50–79, 83–112, and 116–145; these read HAFS…RVNS, GDDT…DVNA, and HGMT…AVNV. The region spanning 210 to 465 is the Protein kinase domain; that stretch reads LNLITKIAES…QIIPILERMI (256 aa).

The protein belongs to the protein kinase superfamily. TKL Ser/Thr protein kinase family. Interacts (via protein kinase domain) with unc-112 (via N-terminus). Interacts (via ANK repeats) with unc-97 (via first LIM domain). Interacts (via protein kinase domain) with pat-6 (via C-terminus CH domain). May form a complex with unc-112, unc-97 and pat-6. Does not interact with integrin pat-3. Component of an integrin containing attachment complex, composed of at least pat-2, pat-3, pat-4, pat-6, unc-52, unc-97 and unc-112. In terms of tissue distribution, expressed in body wall muscle.

The protein localises to the cytoplasm. It localises to the myofibril. The protein resides in the sarcomere. Its subcellular location is the m line. It is found in the basal cell membrane. In terms of biological role, probable pseudokinase that acts as an adapter protein. Component of an integrin containing attachment complex, which is required for muscle development and maintenance. Involved in the assembly of dense bodies and M lines during body wall muscle development by recruiting several of their components including integrin pat-3, cpna-1, unc-89 and unc-112 to integrin-mediated attachment sites. Plays a role in distal tip cell (DTC) migration and in oocyte development probably by regulating the actin cytoskeleton. During the formation of neuromuscular junctions at the larval stage, negatively regulates membrane protrusion from body wall muscles. May be involved in thermotolerance and lifespan. This Caenorhabditis elegans protein is Integrin-linked protein kinase homolog pat-4.